A 154-amino-acid polypeptide reads, in one-letter code: Protein X (154 aa).

Residues 68-117 (PCALRFTSARCMETTVNAHQILPKVLHKRTLGLPAMSTTDLEAYFKDCVF) are mitochondrial targeting sequence.

The protein belongs to the orthohepadnavirus protein X family. May form homodimer. May interact with host CEBPA, CFLAR, CREB1, DDB1, E4F1, HBXIP, HSPD1/HSP60, NFKBIA, POLR2E and SMAD4. Interacts with host SMC5-SMC6 complex and induces its degradation. Interacts with host TRPC4AP; leading to prevent ubiquitination of TRPC4AP. Interacts with host PLSCR1; this interaction promotes ubiquitination and degradation of HBx and impairs HBx-mediated cell proliferation. A fraction may be phosphorylated in insect cells and HepG2 cells, a human hepatoblastoma cell line. Phosphorylated in vitro by host protein kinase C or mitogen-activated protein kinase. N-acetylated in insect cells.

Its subcellular location is the host cytoplasm. It localises to the host nucleus. It is found in the host mitochondrion. In terms of biological role, multifunctional protein that plays a role in silencing host antiviral defenses and promoting viral transcription. Does not seem to be essential for HBV infection. May be directly involved in development of cirrhosis and liver cancer (hepatocellular carcinoma). Most of cytosolic activities involve modulation of cytosolic calcium. The effect on apoptosis is controversial depending on the cell types in which the studies have been conducted. May induce apoptosis by localizing in mitochondria and causing loss of mitochondrial membrane potential. May also modulate apoptosis by binding host CFLAR, a key regulator of the death-inducing signaling complex (DISC). Promotes viral transcription by using the host E3 ubiquitin ligase DDB1 to target the SMC5-SMC6 complex to proteasomal degradation. This host complex would otherwise bind to viral episomal DNA, and prevents its transcription. Moderately stimulates transcription of many different viral and cellular transcription elements. Promoters and enhancers stimulated by HBx contain DNA binding sites for NF-kappa-B, AP-1, AP-2, c-EBP, ATF/CREB, or the calcium-activated factor NF-AT. This is Protein X from Hepatitis B virus genotype A2 subtype adw2 (strain Rutter 1979) (HBV-A).